The sequence spans 281 residues: Bifunctional protein FolD (281 aa).

NADP(+) contacts are provided by residues 167–169 (GRS) and serine 192.

The protein belongs to the tetrahydrofolate dehydrogenase/cyclohydrolase family. In terms of assembly, homodimer.

The catalysed reaction is (6R)-5,10-methylene-5,6,7,8-tetrahydrofolate + NADP(+) = (6R)-5,10-methenyltetrahydrofolate + NADPH. It catalyses the reaction (6R)-5,10-methenyltetrahydrofolate + H2O = (6R)-10-formyltetrahydrofolate + H(+). Its pathway is one-carbon metabolism; tetrahydrofolate interconversion. In terms of biological role, catalyzes the oxidation of 5,10-methylenetetrahydrofolate to 5,10-methenyltetrahydrofolate and then the hydrolysis of 5,10-methenyltetrahydrofolate to 10-formyltetrahydrofolate. This is Bifunctional protein FolD from Alcanivorax borkumensis (strain ATCC 700651 / DSM 11573 / NCIMB 13689 / SK2).